We begin with the raw amino-acid sequence, 317 residues long: Ribonuclease H2 subunit A (317 aa).

The RNase H type-2 domain occupies 43–270; sequence PCCLGVDEAG…AKDMLETKGG (228 aa). Residues D49, E50, and D166 each contribute to the a divalent metal cation site.

It belongs to the RNase HII family. Eukaryotic subfamily. The cofactor is Mn(2+). Mg(2+) serves as cofactor.

It carries out the reaction Endonucleolytic cleavage to 5'-phosphomonoester.. Its function is as follows. Endonuclease that specifically degrades the RNA of RNA-DNA hybrids. Participates in DNA replication. This Neurospora crassa (strain ATCC 24698 / 74-OR23-1A / CBS 708.71 / DSM 1257 / FGSC 987) protein is Ribonuclease H2 subunit A (rnh-201).